The chain runs to 106 residues: MDQFQHIDVQGAQALLEQGEAKLVDIRDPQSFAVAHAESAYHLTNDTIVAFMEDVEFEQPILVMCYHGISSQGAAQYLVNQGFEQVYSVDGGFEAWQRAQLPIVRS.

Residues 17–105 (EQGEAKLVDI…WQRAQLPIVR (89 aa)) form the Rhodanese domain. The active-site Cysteine persulfide intermediate is the cysteine 65.

This sequence belongs to the GlpE family.

It localises to the cytoplasm. It carries out the reaction thiosulfate + hydrogen cyanide = thiocyanate + sulfite + 2 H(+). It catalyses the reaction thiosulfate + [thioredoxin]-dithiol = [thioredoxin]-disulfide + hydrogen sulfide + sulfite + 2 H(+). In terms of biological role, transferase that catalyzes the transfer of sulfur from thiosulfate to thiophilic acceptors such as cyanide or dithiols. May function in a CysM-independent thiosulfate assimilation pathway by catalyzing the conversion of thiosulfate to sulfite, which can then be used for L-cysteine biosynthesis. In Vibrio parahaemolyticus serotype O3:K6 (strain RIMD 2210633), this protein is Thiosulfate sulfurtransferase GlpE.